The chain runs to 574 residues: Efflux pump FUB11 (574 aa).

Residues 1 to 44 (MAIDPQPSSPSLSSETIANDTIGNDNNVNEPSVEPKTQEHQHTV) are disordered. Over residues 9–30 (SPSLSSETIANDTIGNDNNVNE) the composition is skewed to polar residues. Residue Asn19 is glycosylated (N-linked (GlcNAc...) asparagine). The next 11 membrane-spanning stretches (helical) occupy residues 116 to 136 (VATL…LIWA), 148 to 168 (FFFT…AGSI), 176 to 196 (FLTG…IADM), 208 to 228 (MFSG…GFLG), 235 to 255 (WLHG…TVFI), 318 to 338 (IYIS…PIVF), 348 to 368 (IGGL…ISFA), 394 to 414 (AIMG…TTFA), 419 to 439 (IVPI…FMAL), 449 to 469 (IFAA…GAAF), and 484 to 504 (WASS…FLFY). The disordered stretch occupies residues 552-574 (HNSHTSATHSHGHRRSLSCTRSV).

Belongs to the major facilitator superfamily. DHA1 family. Polyamines/proton antiporter (TC 2.A.1.2.16) subfamily.

The protein resides in the cell membrane. Its function is as follows. Efflux pump involved in export of fusaric acid, a mycotoxin with low to moderate toxicity to animals and humans, but with high phytotoxic properties. Constitutes a self-protecting mechanism of the fungus against critical levels of fusaric acid within the cell. This chain is Efflux pump FUB11, found in Gibberella fujikuroi (strain CBS 195.34 / IMI 58289 / NRRL A-6831) (Bakanae and foot rot disease fungus).